The primary structure comprises 1433 residues: Pleckstrin homology domain-containing family H member 1 (1433 aa).

The stretch at 40–174 (NIRHLLAERM…QILMLQDKLQ (135 aa)) forms a coiled coil. Disordered stretches follow at residues 247-346 (DKAD…LSPP) and 552-634 (SSVP…TSSY). The span at 252-266 (PKSSQDGVDATSTVK) shows a compositional bias: polar residues. Over residues 279–299 (MRDRAMGGASDRDHSSDELNS) the composition is skewed to basic and acidic residues. A compositionally biased stretch (low complexity) spans 308-318 (SSSSSSSSSSS). The segment covering 332 to 343 (TPTPKSPPPVSL) has biased composition (pro residues). Over residues 557–567 (PDDDSGSEDDS) the composition is skewed to acidic residues. Residues 568-578 (SSLASLHTSTL) are compositionally biased toward low complexity. Residues 597–606 (VSTSSISSES) show a composition bias toward polar residues. PH domains lie at 643–737 (TLEK…NVLK) and 751–859 (KPTA…VAAG). Residues 896–1050 (FSKEGLRYPL…PSRMEILSIL (155 aa)) enclose the MyTH4 domain. Residues 1061-1392 (FSIPVHFMNN…SYINYWTSSL (332 aa)) enclose the FERM domain.

In terms of biological role, critical component of the guidance pathway underlying endothelial cell migration and blood vessel patterning. Involved in mediating membrane localization of ephrin proteins, which have been shown to provide guidance cues for endothelial cell migration. The sequence is that of Pleckstrin homology domain-containing family H member 1 (plekhh1) from Danio rerio (Zebrafish).